The following is a 742-amino-acid chain: Clamp-binding protein CrfC (742 aa).

The tract at residues 41–45 is clamp-binding consensus; sequence QLALP. In terms of domain architecture, Dynamin-type G spans 66 to 402; the sequence is SRLEMVLAIV…LWEDSLFAQP (337 aa). The G1 motif stretch occupies residues 76-83; the sequence is GTMKAGKS. Residues 102–104 form a G2 motif region; that stretch reads MTA. Positions 236–239 are G3 motif; it reads DTPG. A G4 motif region spans residues 297–300; it reads NKFD. Residues 331–334 are G5 motif; it reads FPVS. A coiled-coil region spans residues 440–472; it reads RAHGLNVACEQLRQNIHQVEESLQLLQLNQAQV.

It belongs to the TRAFAC class dynamin-like GTPase superfamily. Dynamin/Fzo/YdjA family. In terms of assembly, forms homooligomers. Binds to the beta sliding clamp processivity factor (DnaN) in the presence and absence of DNA, may bind to the clamp itself as homodimers or trimers. Homooligomers may be able to bind more than 1 clamp complex.

Its subcellular location is the cytoplasm. Important for the colocalization of sister nascent DNA strands after replication fork passage during DNA replication, and for positioning and subsequent partitioning of sister chromosomes. Does not have GTPase activity on its own. The sequence is that of Clamp-binding protein CrfC (crfC) from Escherichia coli.